Here is a 391-residue protein sequence, read N- to C-terminus: 3-ketoacyl-CoA thiolase (391 aa).

The Acyl-thioester intermediate role is filled by Cys95. Active-site proton acceptor residues include His347 and Cys377.

The protein belongs to the thiolase-like superfamily. Thiolase family. As to quaternary structure, heterotetramer of two alpha chains (FadB) and two beta chains (FadA).

Its subcellular location is the cytoplasm. The catalysed reaction is an acyl-CoA + acetyl-CoA = a 3-oxoacyl-CoA + CoA. The protein operates within lipid metabolism; fatty acid beta-oxidation. Catalyzes the final step of fatty acid oxidation in which acetyl-CoA is released and the CoA ester of a fatty acid two carbons shorter is formed. The protein is 3-ketoacyl-CoA thiolase of Saccharophagus degradans (strain 2-40 / ATCC 43961 / DSM 17024).